The primary structure comprises 216 residues: Adenylate kinase (216 aa).

10–15 contributes to the ATP binding site; the sequence is GAGKGT. The segment at 30–59 is NMP; that stretch reads STGDIFRANIKEKTPLGIEAKRYIDNGQLV. AMP-binding positions include Thr31, Arg36, 57 to 59, 85 to 88, and Gln92; these read QLV and GFPR. Residues 126–163 are LID; it reads GRRVCTSCGASYHIRFNPPKIEGKCDICDNELIQRKDD. Arg127 contacts ATP. Zn(2+)-binding residues include Cys130 and Cys133. Residue 136–137 participates in ATP binding; sequence SY. Cys150 and Cys153 together coordinate Zn(2+). Arg160 and Arg171 together coordinate AMP. ATP is bound at residue Glu199.

Belongs to the adenylate kinase family. As to quaternary structure, monomer.

The protein localises to the cytoplasm. It catalyses the reaction AMP + ATP = 2 ADP. It functions in the pathway purine metabolism; AMP biosynthesis via salvage pathway; AMP from ADP: step 1/1. In terms of biological role, catalyzes the reversible transfer of the terminal phosphate group between ATP and AMP. Plays an important role in cellular energy homeostasis and in adenine nucleotide metabolism. In Clostridium botulinum (strain Langeland / NCTC 10281 / Type F), this protein is Adenylate kinase.